We begin with the raw amino-acid sequence, 309 residues long: Aspartate carbamoyltransferase catalytic subunit (309 aa).

Positions 58 and 59 each coordinate carbamoyl phosphate. Lysine 86 is a binding site for L-aspartate. Carbamoyl phosphate-binding residues include arginine 108, histidine 136, and glutamine 139. L-aspartate contacts are provided by arginine 169 and arginine 223. Carbamoyl phosphate contacts are provided by glycine 265 and proline 266.

This sequence belongs to the aspartate/ornithine carbamoyltransferase superfamily. ATCase family. In terms of assembly, heterododecamer (2C3:3R2) of six catalytic PyrB chains organized as two trimers (C3), and six regulatory PyrI chains organized as three dimers (R2).

It carries out the reaction carbamoyl phosphate + L-aspartate = N-carbamoyl-L-aspartate + phosphate + H(+). The protein operates within pyrimidine metabolism; UMP biosynthesis via de novo pathway; (S)-dihydroorotate from bicarbonate: step 2/3. In terms of biological role, catalyzes the condensation of carbamoyl phosphate and aspartate to form carbamoyl aspartate and inorganic phosphate, the committed step in the de novo pyrimidine nucleotide biosynthesis pathway. The sequence is that of Aspartate carbamoyltransferase catalytic subunit from Akkermansia muciniphila (strain ATCC BAA-835 / DSM 22959 / JCM 33894 / BCRC 81048 / CCUG 64013 / CIP 107961 / Muc).